The sequence spans 367 residues: Probable butyrate kinase (367 aa).

The protein belongs to the acetokinase family.

The protein localises to the cytoplasm. It catalyses the reaction butanoate + ATP = butanoyl phosphate + ADP. In Bacillus cereus (strain G9842), this protein is Probable butyrate kinase.